We begin with the raw amino-acid sequence, 255 residues long: Small ribosomal subunit protein uS2 (255 aa).

The tract at residues 230–255 (QGSSGRDLGASSEVPVEPALEEAAEG) is disordered.

The protein belongs to the universal ribosomal protein uS2 family.

The chain is Small ribosomal subunit protein uS2 from Rhizobium johnstonii (strain DSM 114642 / LMG 32736 / 3841) (Rhizobium leguminosarum bv. viciae).